Consider the following 239-residue polypeptide: Lipid transferase CIDEC (239 aa).

The segment at M1–P35 is required for liquid-liquid phase separation (LLPS). The CIDE-N domain maps to R41–P118. The RKKR polybasic motif signature appears at R123–R126.

It belongs to the CIDE family. In terms of assembly, homodimer. Homooligomer; undergoes liquid-liquid phase separation (LLPS) via its N-terminus, facilitating lipid droplet fusion, occurs at the lipid droplet contact sites. Interacts with CIDEA. Interacts with PLIN1. Interacts with NFAT5; this interaction is direct and retains NFAT5 in the cytoplasm. Interacts with CEBPB. Interacts with isoform CLSTN3beta of CLSTN3; inhibiting the lipid transferase activity of CIDEC. In terms of processing, ubiquitinated and targeted to proteasomal degradation, resulting in a short half-life (about 15 minutes in 3T3-L1 cells). Protein stability depends on triaclyglycerol synthesis, fatty acid availability and lipid droplet formation. In terms of tissue distribution, expressed almost exclusively in adipose tissue, including subcutaneous and epididymal white adipose tissue (at protein level). Although abundantly present in brown adipose tissue at the mRNA level, the protein is almost undetectable in this tissue, or at moderate levels. Expressed in the mammary gland, in stromal adipose tissue, but becomes undetectable at the end of pregnancy and during lactation (at protein level). Expressed at low levels in skeletal muscle and heart.

Its subcellular location is the lipid droplet. It localises to the endoplasmic reticulum. The protein resides in the nucleus. It carries out the reaction a triacyl-sn-glycerol(in) = a triacyl-sn-glycerol(out). Its function is as follows. Lipid transferase specifically expressed in white adipose tissue, which promotes unilocular lipid droplet formation by mediating lipid droplet fusion. Lipid droplet fusion promotes their enlargement, restricting lipolysis and favoring lipid storage. Localizes on the lipid droplet surface, at focal contact sites between lipid droplets, and mediates atypical lipid droplet fusion by undergoing liquid-liquid phase separation (LLPS) and promoting directional net neutral lipid transfer from the smaller to larger lipid droplets. The transfer direction may be driven by the internal pressure difference between the contacting lipid droplet pair. Its role in neutral lipid transfer and lipid droplet enlargement is activated by the interaction with PLIN1. May also act as a CEBPB coactivator in the white adipose tissue to control the expression of a subset of CEBPB downstream target genes, including SOCS1, SOCS3, TGFB1, TGFBR1, ID2 and XDH. When overexpressed in preadipocytes, induces apoptosis or increases cell susceptibility to apoptosis induced by serum deprivation or TGFB treatment. This is Lipid transferase CIDEC from Mus musculus (Mouse).